Here is a 108-residue protein sequence, read N- to C-terminus: Iron-sulfur cluster assembly protein CyaY (108 aa).

This sequence belongs to the frataxin family.

Functionally, involved in iron-sulfur (Fe-S) cluster assembly. May act as a regulator of Fe-S biogenesis. The polypeptide is Iron-sulfur cluster assembly protein CyaY (Burkholderia ambifaria (strain MC40-6)).